Here is a 123-residue protein sequence, read N- to C-terminus: Transmembrane protein 254 (123 aa).

3 consecutive transmembrane segments (helical) span residues 15–35 (LFWFTVIAVSFSYYTWVVFWP), 63–83 (NGYWLAWLVHVGESLYALVLC), and 95–115 (LLWFLQTFLFGVASLSILFAY).

It is found in the membrane. This is Transmembrane protein 254 (Tmem254) from Rattus norvegicus (Rat).